A 431-amino-acid polypeptide reads, in one-letter code: Probable oxidoreductase OrdL (431 aa).

This chain is Probable oxidoreductase OrdL (ordL), found in Haemophilus influenzae (strain ATCC 51907 / DSM 11121 / KW20 / Rd).